The chain runs to 232 residues: Phosphatidylserine decarboxylase proenzyme (232 aa).

The active-site Schiff-base intermediate with substrate; via pyruvic acid is S190. S190 is subject to Pyruvic acid (Ser); by autocatalysis.

Belongs to the phosphatidylserine decarboxylase family. PSD-A subfamily. As to quaternary structure, heterodimer of a large membrane-associated beta subunit and a small pyruvoyl-containing alpha subunit. Pyruvate is required as a cofactor. Post-translationally, is synthesized initially as an inactive proenzyme. Formation of the active enzyme involves a self-maturation process in which the active site pyruvoyl group is generated from an internal serine residue via an autocatalytic post-translational modification. Two non-identical subunits are generated from the proenzyme in this reaction, and the pyruvate is formed at the N-terminus of the alpha chain, which is derived from the carboxyl end of the proenzyme. The post-translation cleavage follows an unusual pathway, termed non-hydrolytic serinolysis, in which the side chain hydroxyl group of the serine supplies its oxygen atom to form the C-terminus of the beta chain, while the remainder of the serine residue undergoes an oxidative deamination to produce ammonia and the pyruvoyl prosthetic group on the alpha chain.

The protein resides in the cell membrane. It catalyses the reaction a 1,2-diacyl-sn-glycero-3-phospho-L-serine + H(+) = a 1,2-diacyl-sn-glycero-3-phosphoethanolamine + CO2. The protein operates within phospholipid metabolism; phosphatidylethanolamine biosynthesis; phosphatidylethanolamine from CDP-diacylglycerol: step 2/2. Catalyzes the formation of phosphatidylethanolamine (PtdEtn) from phosphatidylserine (PtdSer). In Rhodopseudomonas palustris (strain HaA2), this protein is Phosphatidylserine decarboxylase proenzyme.